A 123-amino-acid polypeptide reads, in one-letter code: Small ribosomal subunit protein uS13 (123 aa).

Residues 97–123 form a disordered region; sequence PVRGQRTHTNAKTRKGRSKLPVAAKKK.

The protein belongs to the universal ribosomal protein uS13 family. In terms of assembly, part of the 30S ribosomal subunit. Forms a loose heterodimer with protein S19. Forms two bridges to the 50S subunit in the 70S ribosome.

Located at the top of the head of the 30S subunit, it contacts several helices of the 16S rRNA. In the 70S ribosome it contacts the 23S rRNA (bridge B1a) and protein L5 of the 50S subunit (bridge B1b), connecting the 2 subunits; these bridges are implicated in subunit movement. Contacts the tRNAs in the A and P-sites. The sequence is that of Small ribosomal subunit protein uS13 from Ehrlichia canis (strain Jake).